A 184-amino-acid chain; its full sequence is MALPVSLLMALVVLSCHSICSLGCDLPHTHSLGNTRVLMLLGQMRRISPFSCLKDRNDFGFPQEVFDGNQFRKPQAISAVHETIQQIFHLFSTDGSSAAWDESLLDKLYTGLYQQLTELEACLSQEVGVEETPLMNEDSLLAVRRYFQRIALYLQEKKYSPCAWEIVRAEIMRSFSSSTNLPQS.

The signal sequence occupies residues 1 to 23; that stretch reads MALPVSLLMALVVLSCHSICSLG. 2 disulfides stabilise this stretch: Cys24/Cys122 and Cys52/Cys162.

This sequence belongs to the alpha/beta interferon family. As to quaternary structure, interacts with CR2.

The protein localises to the secreted. Produced by macrophages, IFN-alpha have antiviral activities. Interferon stimulates the production of two enzymes: a protein kinase and an oligoadenylate synthetase. This is Interferon alpha-1 from Equus caballus (Horse).